The chain runs to 132 residues: Z-ring associated protein G (132 aa).

A helical transmembrane segment spans residues 1–21 (MTWEYALIGLVVGIIIGAVAM). The disordered stretch occupies residues 95 to 132 (FRNRLAESEASNDQAPVQMPRDYSEGASGLLRTGAKRD).

The protein belongs to the ZapG family.

It is found in the cell inner membrane. Its function is as follows. Involved in cell division, cell envelope biogenesis and cell shape maintenance. This Escherichia coli O157:H7 protein is Z-ring associated protein G.